The chain runs to 978 residues: Regulator of MON1-CCZ1 complex homolog (978 aa).

Low complexity-rich tracts occupy residues 311 to 351 (TSTP…MISS) and 479 to 495 (NNNN…NNNN). Disordered stretches follow at residues 311-363 (TSTP…HKEQ), 474-546 (SINQ…NSKT), 558-665 (KQQQ…NNHV), and 703-727 (EKEK…NNNI). Positions 496 to 515 (TAQTLNSTGNLSNSISIGGM) are enriched in polar residues. Low complexity predominate over residues 516 to 539 (NTSTDNLTTTTTTSSSISSSPSNS). The segment covering 582-591 (GDGGSGGSGG) has biased composition (gly residues). Composition is skewed to low complexity over residues 592 to 663 (SFYN…NNNN) and 710 to 727 (NNNN…NNNI). The Mic1 domain occupies 735–908 (KLELDSKYLI…HPSFDKYIKL (174 aa)). Positions 955 to 978 (NNSSPTLRSSNSLNSSPRLQYSNN) are disordered.

This sequence belongs to the RMC1 family.

The protein resides in the lysosome membrane. The protein localises to the late endosome membrane. Functionally, may have a role in autophagy. The protein is Regulator of MON1-CCZ1 complex homolog of Dictyostelium discoideum (Social amoeba).